Reading from the N-terminus, the 464-residue chain is MKNIKIVRILKHDEAIRIEHRISELYSDEFGVVYAGNHLIFNWYQRLYLSRNILISKKSKSRKGLIQMIFIIGICTVFLIIYGIWEQRCHQKRLNSIPIRVNINGIRGKSTVTRLITGVVQEAKYKTVGKTTGTSARMIYWFTDEEQPIKRRKEGPNIGEQRRVVKEAADLEAEALICECMAVQPDYQIIFQNKMIQANVGVIVNVLEDHMDVMGPTLDEVAEAFTATIPYNGHLVTIESEYLDYFKEVAEERNTKVIVADNSRISEEFLRKFDYMVFPDNASLALAVAEALGIDEETAFRGMLNAHPDPGAMRITRFADQSKPAFFVNGFAANDPSSTLRIWERVDDFGYSNLAPIVIMNCRPDRVDRTEQFARDVLPYIKAEIVIAIGETTAPITSAFEKGDIPTQEYWNLEGWSTSEIMSRMRPYLKNRIVYGVGNIHGAAEPLIDMIMEEQIGKKQAKVI.

The chain crosses the membrane as a helical span at residues leucine 65 to tryptophan 85.

Its subcellular location is the cell membrane. The protein operates within capsule biogenesis; capsule polysaccharide biosynthesis. Functionally, essential for the synthesis of the polyglutamate capsule of B.anthracis which is one of the principal virulence factors during anthrax infection. May form a polyglutamyl synthetase complex together with proteins CapA and CapC. This is Capsule biosynthesis protein CapB (capB) from Bacillus anthracis.